A 148-amino-acid chain; its full sequence is Putative nickel-responsive regulator (148 aa).

Ni(2+) contacts are provided by His-77, His-88, His-90, and Cys-96.

This sequence belongs to the transcriptional regulatory CopG/NikR family. It depends on Ni(2+) as a cofactor.

In terms of biological role, transcriptional regulator. The chain is Putative nickel-responsive regulator from Bradyrhizobium diazoefficiens (strain JCM 10833 / BCRC 13528 / IAM 13628 / NBRC 14792 / USDA 110).